The following is a 208-amino-acid chain: ATP-dependent Clp protease proteolytic subunit (208 aa).

Residue Ser-105 is the Nucleophile of the active site. His-130 is a catalytic residue.

The protein belongs to the peptidase S14 family. Fourteen ClpP subunits assemble into 2 heptameric rings which stack back to back to give a disk-like structure with a central cavity, resembling the structure of eukaryotic proteasomes.

The protein localises to the cytoplasm. The enzyme catalyses Hydrolysis of proteins to small peptides in the presence of ATP and magnesium. alpha-casein is the usual test substrate. In the absence of ATP, only oligopeptides shorter than five residues are hydrolyzed (such as succinyl-Leu-Tyr-|-NHMec, and Leu-Tyr-Leu-|-Tyr-Trp, in which cleavage of the -Tyr-|-Leu- and -Tyr-|-Trp bonds also occurs).. Cleaves peptides in various proteins in a process that requires ATP hydrolysis. Has a chymotrypsin-like activity. Plays a major role in the degradation of misfolded proteins. The chain is ATP-dependent Clp protease proteolytic subunit from Xanthomonas campestris pv. campestris (strain 8004).